We begin with the raw amino-acid sequence, 452 residues long: UPF0210 protein Hore_14430 (452 aa).

The protein belongs to the UPF0210 family. As to quaternary structure, homodimer.

This chain is UPF0210 protein Hore_14430, found in Halothermothrix orenii (strain H 168 / OCM 544 / DSM 9562).